A 348-amino-acid polypeptide reads, in one-letter code: Large ribosomal subunit protein uL3m (348 aa).

A mitochondrion-targeting transit peptide spans 1–40 (MPGWRLLTQVGAQVLGRLGDGLGAALGPGNRTHIWLFVRG).

This sequence belongs to the universal ribosomal protein uL3 family. As to quaternary structure, component of the mitochondrial large ribosomal subunit (mt-LSU). Mature mammalian 55S mitochondrial ribosomes consist of a small (28S) and a large (39S) subunit. The 28S small subunit contains a 12S ribosomal RNA (12S mt-rRNA) and 30 different proteins. The 39S large subunit contains a 16S rRNA (16S mt-rRNA), a copy of mitochondrial valine transfer RNA (mt-tRNA(Val)), which plays an integral structural role, and 52 different proteins.

Its subcellular location is the mitochondrion. This Homo sapiens (Human) protein is Large ribosomal subunit protein uL3m (MRPL3).